The sequence spans 312 residues: Ribosomal RNA small subunit methyltransferase H (312 aa).

S-adenosyl-L-methionine contacts are provided by residues 34 to 36, Asp54, Phe78, Asp100, and Gln107; that span reads GGH.

It belongs to the methyltransferase superfamily. RsmH family.

Its subcellular location is the cytoplasm. It catalyses the reaction cytidine(1402) in 16S rRNA + S-adenosyl-L-methionine = N(4)-methylcytidine(1402) in 16S rRNA + S-adenosyl-L-homocysteine + H(+). Functionally, specifically methylates the N4 position of cytidine in position 1402 (C1402) of 16S rRNA. In Salmonella choleraesuis (strain SC-B67), this protein is Ribosomal RNA small subunit methyltransferase H.